The sequence spans 413 residues: Glutamyl-tRNA reductase (413 aa).

Residues 49 to 52, S105, 110 to 112, and Q116 each bind substrate; these read TCNR and EPQ. Residue C50 is the Nucleophile of the active site. 185–190 contacts NADP(+); sequence GAGETI.

This sequence belongs to the glutamyl-tRNA reductase family. Homodimer.

The catalysed reaction is (S)-4-amino-5-oxopentanoate + tRNA(Glu) + NADP(+) = L-glutamyl-tRNA(Glu) + NADPH + H(+). Its pathway is porphyrin-containing compound metabolism; protoporphyrin-IX biosynthesis; 5-aminolevulinate from L-glutamyl-tRNA(Glu): step 1/2. Its function is as follows. Catalyzes the NADPH-dependent reduction of glutamyl-tRNA(Glu) to glutamate 1-semialdehyde (GSA). This chain is Glutamyl-tRNA reductase, found in Coxiella burnetii (strain Dugway 5J108-111).